The primary structure comprises 382 residues: MAP kinase-activated protein kinase 3 (382 aa).

N-acetylmethionine is present on M1. Residues 1 to 34 (MDGETAEEQGGPVPPPVAPGGPGLGGAPGGRREP) form a disordered region. A compositionally biased stretch (gly residues) spans 20 to 29 (GGPGLGGAPG). The Protein kinase domain maps to 44–304 (QLSKQVLGLG…ITQFMNHPWI (261 aa)). ATP contacts are provided by residues 50–58 (LGLGVNGKV) and K73. D166 serves as the catalytic Proton acceptor. T201 is modified (phosphothreonine; by MAPK14). At S251 the chain carries Phosphoserine; by MAPK14. At S307 the chain carries Phosphoserine; by autocatalysis. An autoinhibitory helix region spans residues 307-343 (SMVVPQTPLHTARVLQEDKDHWDEVKEEMTSALATMR). At T313 the chain carries Phosphothreonine; by MAPK14. Residues 335-344 (MTSALATMRV) carry the Nuclear export signal (NES) motif. Residues 345–369 (DYDQVKIKDLKTSNNRLLNKRRKKQ) are p38 MAPK-binding site. Short sequence motifs (bipartite nuclear localization signal) lie at residues 350-353 (KIKD) and 364-368 (KRRKK). A disordered region spans residues 357–382 (SNNRLLNKRRKKQAGSSSASQGCNNQ). The span at 370-382 (AGSSSASQGCNNQ) shows a compositional bias: polar residues.

This sequence belongs to the protein kinase superfamily. CAMK Ser/Thr protein kinase family. As to quaternary structure, heterodimer with p38-alpha/MAPK14. The heterodimer with p38-alpha/MAPK14 forms a stable complex: molecules are positioned 'face to face' so that the ATP-binding sites of both kinases are at the heterodimer interface. Interacts with TCF3 and with polycomb proteins, such as PCH2 and BMI1/PCGF4. Phosphorylated and activated by MAPK1/ERK2 and MAPK3/ERK1. Phosphorylated and activated by MAP kinase p38-alpha/MAPK14 at Thr-201, Ser-251 and Thr-313. As to expression, widely expressed, with a higher expression level observed in heart and skeletal muscle. No expression in brain. Expressed in the retinal pigment epithelium.

It localises to the nucleus. Its subcellular location is the cytoplasm. The catalysed reaction is L-seryl-[protein] + ATP = O-phospho-L-seryl-[protein] + ADP + H(+). It carries out the reaction L-threonyl-[protein] + ATP = O-phospho-L-threonyl-[protein] + ADP + H(+). Activated following phosphorylation by p38-alpha/MAPK14 following various stresses. Inhibited by ligand 5B (2'-[2-(1,3-benzodioxol-5-yl)pyrimidin-4-yl]-5',6'-dihydrospiro[piperidine-4,7'-pyrrolo[3,2-c]pyridin]- 4'(1'h)-one) and ligand P4O (2-[2-(2-fluorophenyl)pyridin-4-yl]-1,5,6,7-tetrahydro- 4h-pyrrolo[3,2-c]pyridin-4-one), 2 ATP-competitive inhibitors. Stress-activated serine/threonine-protein kinase involved in cytokines production, endocytosis, cell migration, chromatin remodeling and transcriptional regulation. Following stress, it is phosphorylated and activated by MAP kinase p38-alpha/MAPK14, leading to phosphorylation of substrates. Phosphorylates serine in the peptide sequence, Hyd-X-R-X(2)-S, where Hyd is a large hydrophobic residue. MAPKAPK2 and MAPKAPK3, share the same function and substrate specificity, but MAPKAPK3 kinase activity and level in protein expression are lower compared to MAPKAPK2. Phosphorylates HSP27/HSPB1, KRT18, KRT20, RCSD1, RPS6KA3, TAB3 and TTP/ZFP36. Mediates phosphorylation of HSP27/HSPB1 in response to stress, leading to dissociate HSP27/HSPB1 from large small heat-shock protein (sHsps) oligomers and impair their chaperone activities and ability to protect against oxidative stress effectively. Involved in inflammatory response by regulating tumor necrosis factor (TNF) and IL6 production post-transcriptionally: acts by phosphorylating AU-rich elements (AREs)-binding proteins, such as TTP/ZFP36, leading to regulate the stability and translation of TNF and IL6 mRNAs. Phosphorylation of TTP/ZFP36, a major post-transcriptional regulator of TNF, promotes its binding to 14-3-3 proteins and reduces its ARE mRNA affinity leading to inhibition of dependent degradation of ARE-containing transcript. Involved in toll-like receptor signaling pathway (TLR) in dendritic cells: required for acute TLR-induced macropinocytosis by phosphorylating and activating RPS6KA3. Also acts as a modulator of Polycomb-mediated repression. The polypeptide is MAP kinase-activated protein kinase 3 (MAPKAPK3) (Homo sapiens (Human)).